A 344-amino-acid chain; its full sequence is Dihydroorotase (344 aa).

H13 and H15 together coordinate Zn(2+). Residues 15–17 and N41 each bind substrate; that span reads HLR. The Zn(2+) site is built by K99, H136, and H174. Residue K99 is modified to N6-carboxylysine. Position 136 (H136) interacts with substrate. L219 is a binding site for substrate. D247 serves as a coordination point for Zn(2+). D247 is an active-site residue. Substrate-binding residues include H251 and A263.

The protein belongs to the metallo-dependent hydrolases superfamily. DHOase family. Class II DHOase subfamily. Homodimer. It depends on Zn(2+) as a cofactor.

The catalysed reaction is (S)-dihydroorotate + H2O = N-carbamoyl-L-aspartate + H(+). The protein operates within pyrimidine metabolism; UMP biosynthesis via de novo pathway; (S)-dihydroorotate from bicarbonate: step 3/3. Catalyzes the reversible cyclization of carbamoyl aspartate to dihydroorotate. The polypeptide is Dihydroorotase (Idiomarina loihiensis (strain ATCC BAA-735 / DSM 15497 / L2-TR)).